The primary structure comprises 227 residues: Phosphoribosylformylglycinamidine synthase subunit PurQ (227 aa).

Residues 3-225 (FAVIVFPGSN…LKQWRETYVV (223 aa)) form the Glutamine amidotransferase type-1 domain. The active-site Nucleophile is cysteine 86. Residues histidine 194 and glutamate 196 contribute to the active site.

In terms of assembly, part of the FGAM synthase complex composed of 1 PurL, 1 PurQ and 2 PurS subunits.

It localises to the cytoplasm. The enzyme catalyses N(2)-formyl-N(1)-(5-phospho-beta-D-ribosyl)glycinamide + L-glutamine + ATP + H2O = 2-formamido-N(1)-(5-O-phospho-beta-D-ribosyl)acetamidine + L-glutamate + ADP + phosphate + H(+). It carries out the reaction L-glutamine + H2O = L-glutamate + NH4(+). Its pathway is purine metabolism; IMP biosynthesis via de novo pathway; 5-amino-1-(5-phospho-D-ribosyl)imidazole from N(2)-formyl-N(1)-(5-phospho-D-ribosyl)glycinamide: step 1/2. Part of the phosphoribosylformylglycinamidine synthase complex involved in the purines biosynthetic pathway. Catalyzes the ATP-dependent conversion of formylglycinamide ribonucleotide (FGAR) and glutamine to yield formylglycinamidine ribonucleotide (FGAM) and glutamate. The FGAM synthase complex is composed of three subunits. PurQ produces an ammonia molecule by converting glutamine to glutamate. PurL transfers the ammonia molecule to FGAR to form FGAM in an ATP-dependent manner. PurS interacts with PurQ and PurL and is thought to assist in the transfer of the ammonia molecule from PurQ to PurL. The sequence is that of Phosphoribosylformylglycinamidine synthase subunit PurQ from Bacillus cereus (strain Q1).